Reading from the N-terminus, the 499-residue chain is Flotillin-like protein 2 (499 aa).

The S-palmitoyl cysteine moiety is linked to residue Cys37. The stretch at 243–319 (LREEAKVKAE…LRLTEKLKAE (77 aa)) forms a coiled coil.

Belongs to the band 7/mec-2 family. Flotillin subfamily. May be palmitoylated.

It localises to the cell membrane. Its subcellular location is the membrane. The protein resides in the caveola. May act as a scaffolding protein within caveolar membranes, functionally participating in formation of caveolae or caveolae-like vesicles. This is Flotillin-like protein 2 (FLOT2) from Oryza sativa subsp. japonica (Rice).